Consider the following 361-residue polypeptide: Phospho-N-acetylmuramoyl-pentapeptide-transferase (361 aa).

The next 10 membrane-spanning stretches (helical) occupy residues Val-18–Leu-38, Thr-73–Leu-93, Phe-97–Tyr-117, Leu-135–Gly-155, Val-168–Ser-188, Gly-196–Ala-216, Gly-235–Trp-255, Val-263–Val-283, Leu-288–Val-308, and Lys-338–Leu-358.

It belongs to the glycosyltransferase 4 family. MraY subfamily. The cofactor is Mg(2+).

Its subcellular location is the cell inner membrane. The catalysed reaction is UDP-N-acetyl-alpha-D-muramoyl-L-alanyl-gamma-D-glutamyl-meso-2,6-diaminopimeloyl-D-alanyl-D-alanine + di-trans,octa-cis-undecaprenyl phosphate = di-trans,octa-cis-undecaprenyl diphospho-N-acetyl-alpha-D-muramoyl-L-alanyl-D-glutamyl-meso-2,6-diaminopimeloyl-D-alanyl-D-alanine + UMP. Its pathway is cell wall biogenesis; peptidoglycan biosynthesis. In terms of biological role, catalyzes the initial step of the lipid cycle reactions in the biosynthesis of the cell wall peptidoglycan: transfers peptidoglycan precursor phospho-MurNAc-pentapeptide from UDP-MurNAc-pentapeptide onto the lipid carrier undecaprenyl phosphate, yielding undecaprenyl-pyrophosphoryl-MurNAc-pentapeptide, known as lipid I. This is Phospho-N-acetylmuramoyl-pentapeptide-transferase from Coxiella burnetii (strain CbuK_Q154) (Coxiella burnetii (strain Q154)).